Here is a 381-residue protein sequence, read N- to C-terminus: Putative F-box protein At4g17200 (381 aa).

The F-box domain maps to 1-47 (MTTMSDLSPDLVGEILTRVPMTSLISVRCTCKMWNALSKEGIFFKAA).

This Arabidopsis thaliana (Mouse-ear cress) protein is Putative F-box protein At4g17200.